The primary structure comprises 346 residues: Holliday junction branch migration complex subunit RuvB (346 aa).

Residues 1–182 are large ATPase domain (RuvB-L); sequence MKIELLNTPA…FGISSRFDYY (182 aa). ATP is bound by residues Ile-21, Arg-22, Gly-63, Lys-66, Thr-67, Thr-68, 129–131, Arg-172, Tyr-182, and Arg-219; that span reads EDF. Thr-67 serves as a coordination point for Mg(2+). The segment at 183–253 is small ATPAse domain (RuvB-S); it reads PPELLERIIL…IAMTTLASLE (71 aa). The tract at residues 256–346 is head domain (RuvB-H); it reads EEGLDDMDKK…GPLFDAAPAR (91 aa). Residues Arg-311 and Arg-316 each coordinate DNA.

The protein belongs to the RuvB family. In terms of assembly, homohexamer. Forms an RuvA(8)-RuvB(12)-Holliday junction (HJ) complex. HJ DNA is sandwiched between 2 RuvA tetramers; dsDNA enters through RuvA and exits via RuvB. An RuvB hexamer assembles on each DNA strand where it exits the tetramer. Each RuvB hexamer is contacted by two RuvA subunits (via domain III) on 2 adjacent RuvB subunits; this complex drives branch migration. In the full resolvosome a probable DNA-RuvA(4)-RuvB(12)-RuvC(2) complex forms which resolves the HJ.

It is found in the cytoplasm. The catalysed reaction is ATP + H2O = ADP + phosphate + H(+). Its function is as follows. The RuvA-RuvB-RuvC complex processes Holliday junction (HJ) DNA during genetic recombination and DNA repair, while the RuvA-RuvB complex plays an important role in the rescue of blocked DNA replication forks via replication fork reversal (RFR). RuvA specifically binds to HJ cruciform DNA, conferring on it an open structure. The RuvB hexamer acts as an ATP-dependent pump, pulling dsDNA into and through the RuvAB complex. RuvB forms 2 homohexamers on either side of HJ DNA bound by 1 or 2 RuvA tetramers; 4 subunits per hexamer contact DNA at a time. Coordinated motions by a converter formed by DNA-disengaged RuvB subunits stimulates ATP hydrolysis and nucleotide exchange. Immobilization of the converter enables RuvB to convert the ATP-contained energy into a lever motion, pulling 2 nucleotides of DNA out of the RuvA tetramer per ATP hydrolyzed, thus driving DNA branch migration. The RuvB motors rotate together with the DNA substrate, which together with the progressing nucleotide cycle form the mechanistic basis for DNA recombination by continuous HJ branch migration. Branch migration allows RuvC to scan DNA until it finds its consensus sequence, where it cleaves and resolves cruciform DNA. In Chlorobium phaeobacteroides (strain DSM 266 / SMG 266 / 2430), this protein is Holliday junction branch migration complex subunit RuvB.